The chain runs to 298 residues: Probable endonuclease 4 (298 aa).

The Zn(2+) site is built by His-69, His-111, Glu-146, Asp-180, His-183, His-215, Asp-228, His-230, and Glu-260.

It belongs to the AP endonuclease 2 family. Zn(2+) serves as cofactor.

The catalysed reaction is Endonucleolytic cleavage to 5'-phosphooligonucleotide end-products.. Functionally, endonuclease IV plays a role in DNA repair. It cleaves phosphodiester bonds at apurinic or apyrimidinic (AP) sites, generating a 3'-hydroxyl group and a 5'-terminal sugar phosphate. The sequence is that of Probable endonuclease 4 from Bacillus cytotoxicus (strain DSM 22905 / CIP 110041 / 391-98 / NVH 391-98).